Here is an 832-residue protein sequence, read N- to C-terminus: Putative beta-glucosidase (832 aa).

Asp225 is an active-site residue. Residues 397–556 (TGKHGYVAKF…DPETEIDYAV (160 aa)) enclose the PA14 domain.

It belongs to the glycosyl hydrolase 3 family.

The protein resides in the cytoplasm. The enzyme catalyses Hydrolysis of terminal, non-reducing beta-D-glucosyl residues with release of beta-D-glucose.. The sequence is that of Putative beta-glucosidase from Schizosaccharomyces pombe (strain 972 / ATCC 24843) (Fission yeast).